Here is a 348-residue protein sequence, read N- to C-terminus: Histidinol-phosphate aminotransferase (348 aa).

Lysine 210 carries the N6-(pyridoxal phosphate)lysine modification.

This sequence belongs to the class-II pyridoxal-phosphate-dependent aminotransferase family. Histidinol-phosphate aminotransferase subfamily. Homodimer. Pyridoxal 5'-phosphate is required as a cofactor.

It catalyses the reaction L-histidinol phosphate + 2-oxoglutarate = 3-(imidazol-4-yl)-2-oxopropyl phosphate + L-glutamate. The protein operates within amino-acid biosynthesis; L-histidine biosynthesis; L-histidine from 5-phospho-alpha-D-ribose 1-diphosphate: step 7/9. The protein is Histidinol-phosphate aminotransferase of Cytophaga hutchinsonii (strain ATCC 33406 / DSM 1761 / CIP 103989 / NBRC 15051 / NCIMB 9469 / D465).